A 513-amino-acid polypeptide reads, in one-letter code: Aspartyl protease family protein 1 (513 aa).

A signal peptide spans 1–21 (MVWYSSCRILFLGLLILLASS). Residues 104–445 (HYANVTVGTP…DREKLILGWK (342 aa)) form the Peptidase A1 domain. Catalysis depends on residues D122 and D327. The disordered stretch occupies residues 452 to 488 (GETSARTLPSNRSSSSARPPASSFDPEATNIPSQRPN). Low complexity predominate over residues 455 to 474 (SARTLPSNRSSSSARPPASS). S484 carries GPI-anchor amidated serine lipidation. Residues 485-513 (QRPNTSTTSAAYSLSISLSLFFFSILAIL) constitute a propeptide, removed in mature form.

It belongs to the peptidase A1 family.

It is found in the cell membrane. In terms of biological role, aspartyl protease. Not able to cleave BAG6. In Arabidopsis thaliana (Mouse-ear cress), this protein is Aspartyl protease family protein 1.